The sequence spans 321 residues: CRISPR-associated endonuclease Cas1 2 (321 aa).

Mn(2+) contacts are provided by Glu-150, His-213, and Glu-228.

The protein belongs to the CRISPR-associated endonuclease Cas1 family. In terms of assembly, homodimer, forms a heterotetramer with a Cas2 homodimer. Mg(2+) is required as a cofactor. It depends on Mn(2+) as a cofactor.

In terms of biological role, CRISPR (clustered regularly interspaced short palindromic repeat), is an adaptive immune system that provides protection against mobile genetic elements (viruses, transposable elements and conjugative plasmids). CRISPR clusters contain spacers, sequences complementary to antecedent mobile elements, and target invading nucleic acids. CRISPR clusters are transcribed and processed into CRISPR RNA (crRNA). Acts as a dsDNA endonuclease. Involved in the integration of spacer DNA into the CRISPR cassette. In Moorella thermoacetica (strain ATCC 39073 / JCM 9320), this protein is CRISPR-associated endonuclease Cas1 2.